A 275-amino-acid polypeptide reads, in one-letter code: MANYTAADVKRLRELTGSGMMDCKNALAETDGDFDKAVELLRIKGAKDVGKRAERTTAEGLVAAKDGVMIEINSETDFVAKNDEFQALANQIVTAAAAAKTADLDSLKALDLGDGRTADAALQELAAKIGEKLELRRVVSLDGPVATYLHKRASDLPPAVGVLVEYQGAGDAAAEAARAAAMQVAALKAKYVTRDEVPADIVENERRIAEQTAREEGKPEAALPKITEGRVNGFFKDVVLLEQPSVTDNKKTVKQQLDEAGVTVTRFARFEVGQA.

Residues 76 to 79 (TDFV) form an involved in Mg(2+) ion dislocation from EF-Tu region.

Belongs to the EF-Ts family.

The protein localises to the cytoplasm. Associates with the EF-Tu.GDP complex and induces the exchange of GDP to GTP. It remains bound to the aminoacyl-tRNA.EF-Tu.GTP complex up to the GTP hydrolysis stage on the ribosome. The polypeptide is Elongation factor Ts (Nocardia farcinica (strain IFM 10152)).